Consider the following 373-residue polypeptide: tRNA-specific 2-thiouridylase MnmA (373 aa).

Residues 12–19 and Met-38 each bind ATP; that span reads GMSGGVDS. The segment at 98–100 is interaction with target base in tRNA; it reads NPD. The Nucleophile role is filled by Cys-103. Cys-103 and Cys-200 are disulfide-bonded. Residue Gly-127 participates in ATP binding. Residues 150–152 form an interaction with tRNA region; sequence KDQ. The active-site Cysteine persulfide intermediate is the Cys-200. The tract at residues 312-313 is interaction with tRNA; that stretch reads RY.

This sequence belongs to the MnmA/TRMU family.

It localises to the cytoplasm. It carries out the reaction S-sulfanyl-L-cysteinyl-[protein] + uridine(34) in tRNA + AH2 + ATP = 2-thiouridine(34) in tRNA + L-cysteinyl-[protein] + A + AMP + diphosphate + H(+). In terms of biological role, catalyzes the 2-thiolation of uridine at the wobble position (U34) of tRNA, leading to the formation of s(2)U34. The polypeptide is tRNA-specific 2-thiouridylase MnmA (Streptococcus pyogenes serotype M1).